The following is a 222-amino-acid chain: MGEPSKEEYKIQCFDAETQQLLKTALKDPGAVDLEKVANVIVDHSLQDSVFSKEAGRMCYAIIQAESKQAGQSVFRRGLLNRLQQEYQTREQLRARSLQGWVCYVTFICNIFDYLRVNNMPMMALVNPVYDCLFRLAQPDSLSKEEEVDCLVLQLHRVGEQLEKMNGQRMDELFVLIRDGFLLPAGLSSLAQLLLLEIIEFRAAGWKTTPAAHKYYYSEVSD.

The region spanning glutamate 3–glycine 205 is the MIF4G domain.

This sequence belongs to the MIF4GD family. Interacts with EIF4G1, EIF4G2 and SLBP; probably tethered by SLBP to the 3'-end of mRNAs ending with the histone stem-loop, it also interacts with EIF4G1 which is bound to their 5'-end.

Its subcellular location is the cytoplasm. The protein resides in the nucleus. In terms of biological role, functions in replication-dependent translation of histone mRNAs which differ from other eukaryotic mRNAs in that they do not end with a poly-A tail but a stem-loop. May participate in circularizing those mRNAs specifically enhancing their translation. This is MIF4G domain-containing protein (MIF4GD) from Bos taurus (Bovine).